A 293-amino-acid polypeptide reads, in one-letter code: ATP synthase gamma chain (293 aa).

Belongs to the ATPase gamma chain family. F-type ATPases have 2 components, CF(1) - the catalytic core - and CF(0) - the membrane proton channel. CF(1) has five subunits: alpha(3), beta(3), gamma(1), delta(1), epsilon(1). CF(0) has three main subunits: a, b and c.

The protein localises to the cell inner membrane. Its function is as follows. Produces ATP from ADP in the presence of a proton gradient across the membrane. The gamma chain is believed to be important in regulating ATPase activity and the flow of protons through the CF(0) complex. This is ATP synthase gamma chain from Chlorobium chlorochromatii (strain CaD3).